Reading from the N-terminus, the 261-residue chain is Thioesterase TesA (261 aa).

A disordered region spans residues 1 to 24 (MLARHGPRYGGSVNGHSDDSSGDA). Residues serine 104, aspartate 208, and histidine 236 contribute to the active site.

It belongs to the thioesterase family.

It catalyses the reaction a fatty acyl-CoA + H2O = a fatty acid + CoA + H(+). Its function is as follows. Involved in the synthesis of both phthiocerol dimycocerosates (PDIMs) and phenolic glycolipids (PGLs), which are structurally related lipids non-covalently bound to the outer cell wall layer of M.tuberculosis and are important virulence factors. This Mycobacterium bovis (strain ATCC BAA-935 / AF2122/97) protein is Thioesterase TesA (tesA).